Reading from the N-terminus, the 357-residue chain is Anthranilate phosphoribosyltransferase (357 aa).

5-phospho-alpha-D-ribose 1-diphosphate is bound by residues Gly94, 97–98 (GD), Thr102, 104–107 (NLST), 122–130 (KHGNRAASS), and Gly134. Gly94 contacts anthranilate. Residue Ser106 participates in Mg(2+) binding. Asn125 is an anthranilate binding site. Position 180 (Arg180) interacts with anthranilate. Mg(2+) contacts are provided by Asp238 and Glu239.

It belongs to the anthranilate phosphoribosyltransferase family. As to quaternary structure, homodimer. Mg(2+) is required as a cofactor.

The catalysed reaction is N-(5-phospho-beta-D-ribosyl)anthranilate + diphosphate = 5-phospho-alpha-D-ribose 1-diphosphate + anthranilate. Its pathway is amino-acid biosynthesis; L-tryptophan biosynthesis; L-tryptophan from chorismate: step 2/5. Its function is as follows. Catalyzes the transfer of the phosphoribosyl group of 5-phosphorylribose-1-pyrophosphate (PRPP) to anthranilate to yield N-(5'-phosphoribosyl)-anthranilate (PRA). This chain is Anthranilate phosphoribosyltransferase, found in Mycobacterium sp. (strain KMS).